A 35-amino-acid chain; its full sequence is Trypsin inhibitor 1 (35 aa).

3 disulfide bridges follow: Cys2/Cys19, Cys9/Cys23, and Cys18/Cys34.

Its function is as follows. Trypsin inhibitor. This Spinacia oleracea (Spinach) protein is Trypsin inhibitor 1.